The chain runs to 346 residues: Peroxidase 37 (346 aa).

The signal sequence occupies residues 1–22; it reads MHSSLIKLGFLLLLIQVSLSHA. Pyrrolidone carboxylic acid is present on Q23. Cystine bridges form between C33–C113, C66–C71, C119–C323, and C199–C231. H64 acts as the Proton acceptor in catalysis. 5 residues coordinate Ca(2+): D65, V68, G70, D72, and S74. N79 carries an N-linked (GlcNAc...) asparagine glycan. Residue P161 coordinates substrate. H192 contributes to the heme b binding site. Residue T193 participates in Ca(2+) binding. Residues N208 and N236 are each glycosylated (N-linked (GlcNAc...) asparagine). 3 residues coordinate Ca(2+): D244, T247, and D252.

This sequence belongs to the peroxidase family. Classical plant (class III) peroxidase subfamily. Heme b is required as a cofactor. Requires Ca(2+) as cofactor.

Its subcellular location is the secreted. It is found in the vacuole. It catalyses the reaction 2 a phenolic donor + H2O2 = 2 a phenolic radical donor + 2 H2O. Functionally, removal of H(2)O(2), oxidation of toxic reductants, biosynthesis and degradation of lignin, suberization, auxin catabolism, response to environmental stresses such as wounding, pathogen attack and oxidative stress. These functions might be dependent on each isozyme/isoform in each plant tissue. This is Peroxidase 37 (PER37) from Arabidopsis thaliana (Mouse-ear cress).